Reading from the N-terminus, the 306-residue chain is High osmolarity signaling protein MOS1 (306 aa).

Residues 1–23 lie on the Cytoplasmic side of the membrane; it reads MEHSRPYGGRKRMSLGNILGDPF. The helical transmembrane segment at 24–44 threads the bilayer; that stretch reads ALATISISLLAWFITFISCVI. Topologically, residues 45 to 67 are extracellular; it reads AQVQANKNKGLPDKDNPDGNFPP. A helical transmembrane segment spans residues 68-88; the sequence is FAWWAVVYSLFLIVGVVIVVA. Residues 89–96 lie on the Cytoplasmic side of the membrane; sequence SDAIQTYH. Residues 97–117 form a helical membrane-spanning segment; the sequence is VAVTGYLAGGMVLVTSGVNSL. Residues 118-126 lie on the Extracellular side of the membrane; sequence VYSKNGARE. The helical transmembrane segment at 127–147 threads the bilayer; the sequence is AAAAGFILLSMVVIVWIFYFG. The Cytoplasmic portion of the chain corresponds to 148 to 306; sequence STPSSTPRAF…IAPSNYLILL (159 aa). A disordered region spans residues 204-242; it reads FENPSPVGGASQAPTAPTMPTYGNNTMQPNNKSNDEEVL. A compositionally biased stretch (polar residues) spans 224–235; it reads TYGNNTMQPNNK. The 61-residue stretch at 246–306 folds into the SH3 domain; the sequence is DYPYQAKAIY…IAPSNYLILL (61 aa).

This sequence belongs to the SHO1 family. Forms homooligomers.

It is found in the cell membrane. In terms of biological role, plasma membrane osmosensor that activates the high osmolarity glycerol (HOG) MAPK signaling pathway in response to high osmolarity. Affects fungal virulence. The protein is High osmolarity signaling protein MOS1 (MOS1) of Metarhizium robertsii (strain ARSEF 23 / ATCC MYA-3075) (Metarhizium anisopliae (strain ARSEF 23)).